Here is a 108-residue protein sequence, read N- to C-terminus: Glutaredoxin-1 (108 aa).

A Glutaredoxin domain is found at 3 to 106 (EEFVQQRLAN…DILSSIGVLR (104 aa)). The cysteines at positions 23 and 26 are disulfide-linked.

Belongs to the glutaredoxin family.

The protein localises to the virion. Its function is as follows. Displays thioltransferase and dehydroascorbate reductase activities. The chain is Glutaredoxin-1 (OPG075) from Vaccinia virus (strain Copenhagen) (VACV).